We begin with the raw amino-acid sequence, 702 residues long: BRCA1-associated RING domain protein 1 (702 aa).

The segment at 18–67 adopts an RING-type zinc-finger fold; the sequence is CVKCKKPRGDLQYLGSSCKHAYCWECIATFQQKPSGKRSSVARHMCPSCA. Disordered regions lie at residues 153-205 and 281-346; these read DENR…TSVK and ASMS…YGTR. Polar residues predominate over residues 174–188; it reads ASPTRNSTKRPSTVS. Basic and acidic residues predominate over residues 312–321; that stretch reads IKSDKIERRS. ANK repeat units lie at residues 347–376, 379–408, and 413–442; these read RGEA…CVNE, DGKT…VINA, and TLET…SIKI. Residues 601 to 702 enclose the BRCT domain; it reads MQPKLFAGCK…LGCSITTPPH (102 aa).

In terms of assembly, heterodimer (via RING-type zinc finger) with brc-1 to form the core CeBCD complex. Brc-1-brd-1 heterodimer-containing CeBCD complexes bound to chromatin are activated as an E3-ubiquitin ligase in response to DNA damage. The heterodimer interacts with the recombinase rad-51 following ionizing irradiation; the interaction is direct. The heterodimer interacts the E2-ubiquitin-conjugating enzyme let-70 following ionizing irradiation. The heterodimer interacts with the pro-crossover proteins msh-5 and syp-3. Interacts with smt-3, tac-1 and ubc-9. Autoubiquitinated. Post-translationally, phosphorylation of CeBCD complexes is required for E3 ubiquitin-protein ligase activity.

Its subcellular location is the cytoplasm. It localises to the nucleus. It is found in the chromosome. The enzyme catalyses S-ubiquitinyl-[E2 ubiquitin-conjugating enzyme]-L-cysteine + [acceptor protein]-L-lysine = [E2 ubiquitin-conjugating enzyme]-L-cysteine + N(6)-ubiquitinyl-[acceptor protein]-L-lysine.. Its pathway is protein modification; protein ubiquitination. Its activity is regulated as follows. E3 ubiquitin-protein ligase activity of CeBCD complexes occurs at DNA damage sites. Following DNA damage, E3 ubiquitin-protein ligase activity is reduced by caffeine treatment (inhibitor of ATM and ATK kinase activity). Its function is as follows. Constituent of the CeBCD complex that possesses E3 ubiquitin-protein ligase activity. When bound to chromatin, the brc-1-brd-1 heterodimer within the CeBCD complex is inactive during normal conditions, but in response to DNA damage, the brc-1-brd-1 heterodimer associates with other proteins such as the recombinase rad-51 or the E2-ubiquitin-conjugating enzyme let-70, which activate the CeBCD complex as an E3-ubiquitin ligase. Moreover, association between the brc-1-brd-1 heterodimer and rad-51 and let-70, probably requires DNA checkpoint proteins such as atl-1 and mre-11 in order to induce ubiquitination at DNA damage sites. To this end, the brc-1-brd-1 heterodimer coordinates a diverse range of cellular pathways such as DNA damage repair, ubiquitination and transcriptional regulation to maintain genomic stability. Plays a role in triggering cellular responses at damage sites in response to DNA damage that may be induced by ionizing radiation for example. In particular, protects against chromosome non-disjunction and nuclear fragmentation during meiotic double-strand break repair to ensure sister chromatid recombination and aid chromosome stability. This Caenorhabditis elegans protein is BRCA1-associated RING domain protein 1.